The chain runs to 44 residues: Large ribosomal subunit protein P2 (44 aa).

Methionine 1 is subject to N-acetylmethionine. Phosphoserine occurs at positions 17 and 19. An N6-acetyllysine; alternate modification is found at lysine 21. Lysine 21 bears the N6-succinyllysine; alternate mark.

Belongs to the eukaryotic ribosomal protein P1/P2 family. Heterodimer with RPLP1 at the lateral ribosomal stalk of the large ribosomal subunit. Post-translationally, phosphorylated.

In terms of biological role, plays an important role in the elongation step of protein synthesis. The sequence is that of Large ribosomal subunit protein P2 (RPLP2) from Oryctolagus cuniculus (Rabbit).